The primary structure comprises 192 residues: NADH dehydrogenase [ubiquinone] iron-sulfur protein 3 (192 aa).

It belongs to the complex I 30 kDa subunit family. Complex I is composed of about 45 different subunits. This is a component of the iron-sulfur (IP) fragment of the enzyme.

Its subcellular location is the mitochondrion inner membrane. The enzyme catalyses a ubiquinone + NADH + 5 H(+)(in) = a ubiquinol + NAD(+) + 4 H(+)(out). Its function is as follows. Core subunit of the mitochondrial membrane respiratory chain NADH dehydrogenase (Complex I) that is believed to belong to the minimal assembly required for catalysis. Complex I functions in the transfer of electrons from NADH to the respiratory chain. The immediate electron acceptor for the enzyme is believed to be ubiquinone. This is NADH dehydrogenase [ubiquinone] iron-sulfur protein 3 (NAD9) from Beta trigyna (Caucasian wild beet).